Reading from the N-terminus, the 197-residue chain is Phosphoheptose isomerase (197 aa).

The region spanning 34–196 is the SIS domain; the sequence is MVNCLLGGNK…DRTLFPQDEQ (163 aa). Residue 49 to 51 participates in substrate binding; it reads NGG. Residues His58 and Glu62 each coordinate Zn(2+). Residues Glu62, 91-92, 117-119, Ser122, and Gln172 each bind substrate; these read ND and STS. Zn(2+)-binding residues include Gln172 and His180.

Belongs to the SIS family. GmhA subfamily. In terms of assembly, homotetramer. It depends on Zn(2+) as a cofactor.

Its subcellular location is the cytoplasm. It catalyses the reaction 2 D-sedoheptulose 7-phosphate = D-glycero-alpha-D-manno-heptose 7-phosphate + D-glycero-beta-D-manno-heptose 7-phosphate. Its pathway is carbohydrate biosynthesis; D-glycero-D-manno-heptose 7-phosphate biosynthesis; D-glycero-alpha-D-manno-heptose 7-phosphate and D-glycero-beta-D-manno-heptose 7-phosphate from sedoheptulose 7-phosphate: step 1/1. Functionally, catalyzes the isomerization of sedoheptulose 7-phosphate in D-glycero-D-manno-heptose 7-phosphate. The chain is Phosphoheptose isomerase from Shewanella pealeana (strain ATCC 700345 / ANG-SQ1).